A 469-amino-acid polypeptide reads, in one-letter code: Interstitial collagenase (469 aa).

The first 19 residues, 1–19, serve as a signal peptide directing secretion; sequence MFSLLLLLLLLCNTGSHGF. A propeptide spans 20–99 (activation peptide); that stretch reads PAATSETQEQ…PRCGVPDVAE (80 aa). Position 57 is a phosphoserine (serine 57). A Cysteine switch motif is present at residues 90–97; the sequence is PRCGVPDV. Cysteine 92 provides a ligand contact to Zn(2+). N-linked (GlcNAc...) asparagine glycosylation occurs at asparagine 120. Ca(2+) contacts are provided by aspartate 124 and aspartate 158. Zn(2+) is bound by residues histidine 168 and aspartate 170. 4 residues coordinate Ca(2+): aspartate 175, glycine 176, glycine 178, and asparagine 180. Position 183 (histidine 183) interacts with Zn(2+). Residues glycine 190, glycine 192, and aspartate 194 each coordinate Ca(2+). Histidine 196 contacts Zn(2+). Ca(2+)-binding residues include aspartate 198, glutamate 199, and glutamate 201. Zn(2+) is bound at residue histidine 218. Glutamate 219 is a catalytic residue. Zn(2+) is bound by residues histidine 222 and histidine 228. Position 274 is a phosphothreonine (threonine 274). 4 Hemopexin repeats span residues 275-324, 325-371, 374-422, and 423-466; these read PQVC…WPQV, PNGL…FGFP, VKNI…FPGI, and GNKV…WFNC. Cysteine 278 and cysteine 466 are disulfide-bonded. Residues aspartate 285 and glutamine 329 each coordinate Ca(2+). At tyrosine 360 the chain carries Phosphotyrosine; by PKDCC. Aspartate 378 and aspartate 427 together coordinate Ca(2+).

Belongs to the peptidase M10A family. Requires Ca(2+) as cofactor. Zn(2+) serves as cofactor. In terms of processing, undergoes autolytic cleavage to produce a N-terminal fragment having reduced collagenolytic activity. Post-translationally, tyrosine phosphorylated in platelets by PKDCC/VLK.

It is found in the secreted. It localises to the extracellular space. Its subcellular location is the extracellular matrix. It catalyses the reaction Cleavage of the triple helix of collagen at about three-quarters of the length of the molecule from the N-terminus, at 775-Gly-|-Ile-776 in the alpha1(I) chain. Cleaves synthetic substrates and alpha-macroglobulins at bonds where P1' is a hydrophobic residue.. Its activity is regulated as follows. Can be activated without removal of the activation peptide. Cleaves collagens of types I, II, and III at one site in the helical domain. Also cleaves collagens of types VII and X. This Sus scrofa (Pig) protein is Interstitial collagenase (MMP1).